The primary structure comprises 299 residues: ATP phosphoribosyltransferase (299 aa).

The protein belongs to the ATP phosphoribosyltransferase family. Long subfamily. As to quaternary structure, equilibrium between an active dimeric form, an inactive hexameric form and higher aggregates. Interconversion between the various forms is largely reversible and is influenced by the natural substrates and inhibitors of the enzyme. Mg(2+) serves as cofactor.

The protein localises to the cytoplasm. The catalysed reaction is 1-(5-phospho-beta-D-ribosyl)-ATP + diphosphate = 5-phospho-alpha-D-ribose 1-diphosphate + ATP. The protein operates within amino-acid biosynthesis; L-histidine biosynthesis; L-histidine from 5-phospho-alpha-D-ribose 1-diphosphate: step 1/9. With respect to regulation, feedback inhibited by histidine. Functionally, catalyzes the condensation of ATP and 5-phosphoribose 1-diphosphate to form N'-(5'-phosphoribosyl)-ATP (PR-ATP). Has a crucial role in the pathway because the rate of histidine biosynthesis seems to be controlled primarily by regulation of HisG enzymatic activity. This Sodalis glossinidius (strain morsitans) protein is ATP phosphoribosyltransferase.